The following is a 565-amino-acid chain: Periplasmic trehalase (565 aa).

Residues methionine 1 to alanine 30 form the signal peptide. Substrate contacts are provided by residues arginine 152, tryptophan 159 to aspartate 160, asparagine 196, arginine 205 to glutamine 207, arginine 277 to glutamate 279, and glycine 310. Residues aspartate 312 and glutamate 496 each act as proton donor/acceptor in the active site. Glutamate 511 contacts substrate. The tract at residues proline 538–proline 565 is disordered. The span at threonine 548–proline 565 shows a compositional bias: polar residues.

It belongs to the glycosyl hydrolase 37 family. In terms of assembly, monomer.

The protein resides in the periplasm. The catalysed reaction is alpha,alpha-trehalose + H2O = alpha-D-glucose + beta-D-glucose. Its function is as follows. Provides the cells with the ability to utilize trehalose at high osmolarity by splitting it into glucose molecules that can subsequently be taken up by the phosphotransferase-mediated uptake system. The protein is Periplasmic trehalase of Escherichia coli O139:H28 (strain E24377A / ETEC).